A 369-amino-acid polypeptide reads, in one-letter code: Histidinol-phosphate aminotransferase (369 aa).

Lys-223 bears the N6-(pyridoxal phosphate)lysine mark.

The protein belongs to the class-II pyridoxal-phosphate-dependent aminotransferase family. Histidinol-phosphate aminotransferase subfamily. As to quaternary structure, homodimer. Pyridoxal 5'-phosphate serves as cofactor.

It catalyses the reaction L-histidinol phosphate + 2-oxoglutarate = 3-(imidazol-4-yl)-2-oxopropyl phosphate + L-glutamate. It functions in the pathway amino-acid biosynthesis; L-histidine biosynthesis; L-histidine from 5-phospho-alpha-D-ribose 1-diphosphate: step 7/9. Functionally, catalyzes the conversion of imidazole acetol phosphate to histidinol phosphate. Can also transaminate aromatic amino acids and histidine in addition to histidinol phosphate. This chain is Histidinol-phosphate aminotransferase, found in Zymomonas mobilis subsp. mobilis (strain ATCC 31821 / ZM4 / CP4).